The primary structure comprises 129 residues: Trefoil factor 2 (129 aa).

The signal sequence occupies residues 1-23 (MGPRGAPLLAVVLVLGLHALVEG). P-type domains lie at 29–73 (CRCS…FHPL) and 79–122 (EQCV…FFPQ). 7 cysteine pairs are disulfide-bonded: Cys29–Cys127, Cys31–Cys58, Cys42–Cys57, Cys52–Cys69, Cys81–Cys107, Cys91–Cys106, and Cys101–Cys118.

Stomach and pancreas.

The protein localises to the secreted. In terms of biological role, inhibits gastrointestinal motility and gastric acid secretion. Could function as a structural component of gastric mucus, possibly by stabilizing glycoproteins in the mucus gel through interactions with carbohydrate side chains. The protein is Trefoil factor 2 (Tff2) of Mus musculus (Mouse).